The primary structure comprises 561 residues: Acylcarnitine hydrolase (561 aa).

The first 26 residues, 1–26, serve as a signal peptide directing secretion; the sequence is MARKQPHSWLNAVLFGLLLILIHVWG. A disulfide bridge links C97 with C125. The active-site Acyl-ester intermediate is the S230. C282 and C293 are oxidised to a cystine. Catalysis depends on charge relay system residues E347 and H459.

The protein belongs to the type-B carboxylesterase/lipase family. In terms of tissue distribution, expressed in liver, stomach and kidney.

It is found in the microsome. The protein localises to the endoplasmic reticulum. It catalyses the reaction all-trans-retinyl hexadecanoate + H2O = all-trans-retinol + hexadecanoate + H(+). It carries out the reaction an O-acyl-(R)-carnitine + H2O = (R)-carnitine + a fatty acid + H(+). Functionally, hydrolase with high activity towards palmitoylcarnitine. Is also active with p-nitrophenylacetate and alpha-naphthylacetate. May also hydrolyze retinyl esters. This Rattus norvegicus (Rat) protein is Acylcarnitine hydrolase.